The sequence spans 201 residues: Small ribosomal subunit protein uS4 (201 aa).

An S4 RNA-binding domain is found at 91-151 (SRLDNVVYRA…EKSQKMNWFE (61 aa)).

Belongs to the universal ribosomal protein uS4 family. Part of the 30S ribosomal subunit. Contacts protein S5. The interaction surface between S4 and S5 is involved in control of translational fidelity.

Functionally, one of the primary rRNA binding proteins, it binds directly to 16S rRNA where it nucleates assembly of the body of the 30S subunit. With S5 and S12 plays an important role in translational accuracy. This is Small ribosomal subunit protein uS4 from Corynebacterium glutamicum (strain ATCC 13032 / DSM 20300 / JCM 1318 / BCRC 11384 / CCUG 27702 / LMG 3730 / NBRC 12168 / NCIMB 10025 / NRRL B-2784 / 534).